Consider the following 165-residue polypeptide: NADPH-dependent 7-cyano-7-deazaguanine reductase (165 aa).

The Thioimide intermediate role is filled by Cys56. Asp63 serves as the catalytic Proton donor. Substrate contacts are provided by residues 78–80 and 97–98; these read VES and HE.

It belongs to the GTP cyclohydrolase I family. QueF type 1 subfamily.

Its subcellular location is the cytoplasm. The catalysed reaction is 7-aminomethyl-7-carbaguanine + 2 NADP(+) = 7-cyano-7-deazaguanine + 2 NADPH + 3 H(+). Its pathway is tRNA modification; tRNA-queuosine biosynthesis. Its function is as follows. Catalyzes the NADPH-dependent reduction of 7-cyano-7-deazaguanine (preQ0) to 7-aminomethyl-7-deazaguanine (preQ1). This is NADPH-dependent 7-cyano-7-deazaguanine reductase from Bacillus thuringiensis subsp. konkukian (strain 97-27).